A 466-amino-acid polypeptide reads, in one-letter code: Cysteine--tRNA ligase (466 aa).

Residue Cys-30 coordinates Zn(2+). The 'HIGH' region signature appears at 32 to 42; the sequence is PTVYNYIHIGN. Zn(2+) contacts are provided by Cys-210, His-235, and Glu-239. Positions 267-271 match the 'KMSKS' region motif; that stretch reads KMSKS. Lys-270 is an ATP binding site. Ser-271 is modified (phosphoserine).

The protein belongs to the class-I aminoacyl-tRNA synthetase family. In terms of assembly, monomer. Zn(2+) serves as cofactor.

It is found in the cytoplasm. It catalyses the reaction tRNA(Cys) + L-cysteine + ATP = L-cysteinyl-tRNA(Cys) + AMP + diphosphate. This is Cysteine--tRNA ligase from Geobacillus sp. (strain WCH70).